Here is a 239-residue protein sequence, read N- to C-terminus: Large ribosomal subunit protein uL1 (239 aa).

This sequence belongs to the universal ribosomal protein uL1 family. As to quaternary structure, part of the 50S ribosomal subunit.

Its function is as follows. Binds directly to 23S rRNA. The L1 stalk is quite mobile in the ribosome, and is involved in E site tRNA release. In terms of biological role, protein L1 is also a translational repressor protein, it controls the translation of the L11 operon by binding to its mRNA. The protein is Large ribosomal subunit protein uL1 of Rickettsia rickettsii (strain Iowa).